We begin with the raw amino-acid sequence, 380 residues long: Epoxyqueuosine reductase (380 aa).

The active-site Proton donor is the Asp134. Residues Phe178–Gln208 form the 4Fe-4S ferredoxin-type 1 domain. [4Fe-4S] cluster is bound by residues Cys188, Cys191, Cys194, Cys198, Cys214, Cys240, Cys243, and Cys247. In terms of domain architecture, 4Fe-4S ferredoxin-type 2 spans Pro226–His258.

The protein belongs to the QueG family. In terms of assembly, monomer. It depends on cob(II)alamin as a cofactor. The cofactor is [4Fe-4S] cluster.

The protein localises to the cytoplasm. It carries out the reaction epoxyqueuosine(34) in tRNA + AH2 = queuosine(34) in tRNA + A + H2O. It functions in the pathway tRNA modification; tRNA-queuosine biosynthesis. Functionally, catalyzes the conversion of epoxyqueuosine (oQ) to queuosine (Q), which is a hypermodified base found in the wobble positions of tRNA(Asp), tRNA(Asn), tRNA(His) and tRNA(Tyr). This Bacillus cereus (strain ATCC 14579 / DSM 31 / CCUG 7414 / JCM 2152 / NBRC 15305 / NCIMB 9373 / NCTC 2599 / NRRL B-3711) protein is Epoxyqueuosine reductase.